A 788-amino-acid chain; its full sequence is MDEPSDDENSEPTPKKIKREWVKSYSNKAMEMMKKMGYENDKGLGKSNQGRLEPIIAVQQDGRRGFGLKLDTVQSSAGQWDPACEELEIPEPVLWLHNPGSRADAYSLDQLMGHLVTGEKKLTLDGETRYCDPAILHHILNAKTVFDDLNDNEKRRARSRCNPFETIRSSIFLNRAAVKMANIDSMCNFMFTNPRDPAGQTLVAPDELLYFTDMCAGPGGFSEYVLYRKSWEAKGFGFTLRGANDFKLEKFFAASPESFDTFYGVKEDGNIFDESNQDSLNEYIRMHTPQGVHFAMADGGFSVEGQKNIQEILSKQLYLCQFLTALKILRPNGSFVCKVFDLFTPFSVGLVYLMYKCFQQIAIIKPNSSRPANSERYLVCKYKRSDAETAGIVAYLNTVNLMLSDESQLDENDVLEIFNANELAEDEDFLRYIIDSNNAIGKKQIVGLRKIAAFAQNLELKETKQSEVRQECLKRWGLPDKLRQAPENKPTDRLLDELLADWANERSWLSLPATEMKGVASLNATIKNVADWYFVPVGREETNINACSLFLCKSRGNLLRYTEHKKWELVETAFEVQPRSIFFGQIVYEFYGEGRTIQRMAALHIIDGICLGGVDIRRRPYRERVSMCDKFARSLNKPYRKDRTFGALRSKPLFRLQDMGSFFANMRHYVLKDNSQRLGFALDDNKFFVPGGIMMFCELTNNYVSAHSRSRGQLYYFNVRNKESYYKDQIPRNKADEIFASFRFSFSCRLLWKWTDLRQVEELATEDNPKILFRSDFVKFIADKLGHS.

The region spanning 25 to 71 (YSNKAMEMMKKMGYENDKGLGKSNQGRLEPIIAVQQDGRRGFGLKLD) is the G-patch domain. Residues 143-147 (KTVFD) and Arg-158 contribute to the substrate site. Positions 171 to 384 (IFLNRAAVKM…ERYLVCKYKR (214 aa)) constitute a RrmJ-type SAM-dependent 2'-O-MTase domain. Position 174 (Asn-174) interacts with S-adenosyl-L-methionine. Lys-179 is an active-site residue. 215–221 (CAGPGGF) provides a ligand contact to S-adenosyl-L-methionine. Asp-298 is an active-site residue. 308 to 310 (NIQ) provides a ligand contact to substrate. Residue Lys-338 is the Proton acceptor of the active site. Asn-373 serves as a coordination point for substrate.

As to quaternary structure, interacts (via C-terminus) with r2d2 (via C-terminus).

The protein resides in the nucleus. It localises to the cytoplasm. The enzyme catalyses a 5'-end (N(7)-methyl 5'-triphosphoguanosine)-ribonucleoside in mRNA + S-adenosyl-L-methionine = a 5'-end (N(7)-methyl 5'-triphosphoguanosine)-(2'-O-methyl-ribonucleoside) in mRNA + S-adenosyl-L-homocysteine + H(+). In terms of biological role, S-adenosyl-L-methionine-dependent methyltransferase that mediates mRNA cap1 2'-O-ribose methylation to the 5'-cap structure of mRNAs. Methylates the ribose of the first nucleotide of a m(7)GpppG-capped mRNA to produce m(7)GpppNmp (cap1). Positively regulates the Ago2-dependent small RNA pathway, with roles in both siRNA biogenesis and RISC assembly. Involved in facilitating conversion of pre-RISC into holo-RISC, possibly by promoting the unwinding of Ago2-bound siRNA duplexes and thus the retention of the guide strand in holo-RISC. This is Cap-specific mRNA (nucleoside-2'-O-)-methyltransferase 1 from Drosophila melanogaster (Fruit fly).